Reading from the N-terminus, the 385-residue chain is Leucine aminopeptidase 1 (385 aa).

A signal peptide spans 1–19; the sequence is MKFPNLLSLGVAASTTVLA. Positions 20-87 are excised as a propeptide; that stretch reads AVPNQKPIGD…FPRTFAQTTV (68 aa). Asn177 is a glycosylation site (N-linked (GlcNAc...) asparagine). Zn(2+) is bound by residues His185, Asp204, Glu243, and Asp270. Cysteines 319 and 323 form a disulfide. His352 provides a ligand contact to Zn(2+).

Belongs to the peptidase M28 family. M28E subfamily. Monomer. It depends on Zn(2+) as a cofactor.

The protein localises to the secreted. In terms of biological role, extracellular aminopeptidase that allows assimilation of proteinaceous substrates. This chain is Leucine aminopeptidase 1 (LAP1), found in Ajellomyces capsulatus (strain H88) (Darling's disease fungus).